A 551-amino-acid polypeptide reads, in one-letter code: Solute carrier family 22 member 6 (551 aa).

At 1 to 9 the chain is on the cytoplasmic side; it reads MAFNDLLKQ. Residues 10–30 traverse the membrane as a helical segment; the sequence is VGGVGRFQLIQVTMVVAPLLL. Residues 31–135 are Extracellular-facing; the sequence is MASHNTLQNF…LVCSHRAFRQ (105 aa). Residues Asn-39, Asn-56, Asn-92, and Asn-113 are each glycosylated (N-linked (GlcNAc...) asparagine). A helical membrane pass occupies residues 136–156; that stretch reads LAQSLYMVGVLLGAMVFGYLA. Residues 157–164 are Cytoplasmic-facing; it reads DRLGRRKV. The helical transmembrane segment at 165 to 187 threads the bilayer; sequence LILNYLQTAVSGTCAAYAPNYTV. The Extracellular segment spans residues 188–195; sequence YCVFRLLS. The chain crosses the membrane as a helical span at residues 196–216; the sequence is GMSLASIAINCMTLNVEWMPI. Topologically, residues 217–224 are cytoplasmic; sequence HTRAYVGT. Residues 225 to 245 traverse the membrane as a helical segment; sequence LIGYVYSLGQFLLAGIAYAVP. The Extracellular segment spans residues 246–248; that stretch reads HWR. The helical transmembrane segment at 249–269 threads the bilayer; it reads HLQLVVSVPFFIAFIYSWFFI. Residues 270-337 lie on the Cytoplasmic side of the membrane; it reads ESARWYSSSG…ELLRCPTLRH (68 aa). The helical transmembrane segment at 338–358 threads the bilayer; it reads LFLCLSMLWFATSFAYYGLVM. At 359-368 the chain is on the extracellular side; it reads DLQGFGVSMY. A helical transmembrane segment spans residues 369–389; sequence LIQVIFGAVDLPAKFVCFLVI. The Cytoplasmic portion of the chain corresponds to 390–395; sequence NSMGRR. A helical transmembrane segment spans residues 396 to 416; sequence PAQMASLLLAGICILVNGIIP. The Extracellular segment spans residues 417 to 425; that stretch reads KSHTIIRTS. Residues 426 to 446 form a helical membrane-spanning segment; that stretch reads LAVLGKGCLASSFNCIFLYTG. At 447–484 the chain is on the cytoplasmic side; that stretch reads ELYPTVIRQTGLGMGSTMARVGSIVSPLVSMTAEFYPS. Residues 485-505 form a helical membrane-spanning segment; sequence MPLFIFGAVPVVASAVTALLP. Residues 506–551 are Extracellular-facing; the sequence is ETLGQPLPDTVQDLKSRSRGKQNQQQQEQQKQMMPLQASTQEKNGL. Positions 514-551 are disordered; that stretch reads DTVQDLKSRSRGKQNQQQQEQQKQMMPLQASTQEKNGL. Low complexity predominate over residues 526–537; sequence KQNQQQQEQQKQ. Positions 542-551 are enriched in polar residues; that stretch reads QASTQEKNGL.

This sequence belongs to the major facilitator (TC 2.A.1) superfamily. Organic cation transporter (TC 2.A.1.19) family. Glycosylated. Glycosylation is necessary for proper targeting of the transporter to the plasma membrane. Highly expressed in kidney; in the particular segment of the proximal tubule. In kidney, found preferentially in the cortex and outer medulla and weakly in the inner medulla. Expressed to a lower extent in brain.

The protein localises to the cell membrane. It localises to the basolateral cell membrane. The protein resides in the basal cell membrane. The enzyme catalyses (6R)-L-erythro-5,6,7,8-tetrahydrobiopterin(out) + a dicarboxylate(in) = (6R)-L-erythro-5,6,7,8-tetrahydrobiopterin(in) + a dicarboxylate(out). The catalysed reaction is L-erythro-7,8-dihydrobiopterin(out) + a dicarboxylate(in) = L-erythro-7,8-dihydrobiopterin(in) + a dicarboxylate(out). It catalyses the reaction L-sepiapterin(out) + a dicarboxylate(in) = L-sepiapterin(in) + a dicarboxylate(out). It carries out the reaction prostaglandin F2alpha(out) + a dicarboxylate(in) = prostaglandin F2alpha(in) + a dicarboxylate(out). The enzyme catalyses prostaglandin E2(out) + a dicarboxylate(in) = prostaglandin E2(in) + a dicarboxylate(out). The catalysed reaction is 3',5'-cyclic AMP(out) + a dicarboxylate(in) = 3',5'-cyclic AMP(in) + a dicarboxylate(out). It catalyses the reaction 3',5'-cyclic GMP(out) + a dicarboxylate(in) = 3',5'-cyclic GMP(in) + a dicarboxylate(out). It carries out the reaction urate(out) + a dicarboxylate(in) = urate(in) + a dicarboxylate(out). The enzyme catalyses kynurenate(out) + glutarate(in) = kynurenate(in) + glutarate(out). The catalysed reaction is (indol-3-yl)acetate(out) + a dicarboxylate(in) = (indol-3-yl)acetate(in) + a dicarboxylate(out). It catalyses the reaction indoxyl sulfate(out) + a dicarboxylate(in) = indoxyl sulfate(in) + a dicarboxylate(out). It carries out the reaction N-benzoylglycine(out) + a dicarboxylate(in) = N-benzoylglycine(in) + a dicarboxylate(out). The enzyme catalyses 3-carboxy-4-methyl-5-propyl-2-furanpropanoate(out) + a dicarboxylate(in) = 3-carboxy-4-methyl-5-propyl-2-furanpropanoate(in) + a dicarboxylate(out). Its function is as follows. Secondary active transporter that functions as a Na(+)-independent organic anion (OA)/dicarboxylate antiporter where the uptake of one molecule of OA into the cell is coupled with an efflux of one molecule of intracellular dicarboxylate such as alpha-ketoglutarate or glutarate. Mediates the uptake of OA across the basolateral side of proximal tubule epithelial cells, thereby contributing to the renal elimination of endogenous OA from the systemic circulation into the urine. Function as a biopterin transporters involved in the uptake and the secretion of coenzymes tetrahydrobiopterin (BH4) dihydrobiopterin (BH2) and sepiapterin to urine, thereby determining baseline levels of blood biopterins. Transports prostaglandin E2 (PGE2) and prostaglandin F2-alpha (PGF2-alpha) and may contribute to their renal excretion. Also mediates the uptake of cyclic nucleotides such as cAMP and cGMP. Involved in the transport of neuroactive tryptophan metabolites kynurenate (KYNA) and xanthurenate (XA) and may contribute to their secretion from the brain. May transport glutamate. Also involved in the disposition of uremic toxins and potentially toxic xenobiotics by the renal organic anion secretory pathway, helping reduce their undesired toxicological effects on the body. Uremic toxins include the indoxyl sulfate (IS), hippurate, indole acetate (IA), 3-carboxy-4- methyl-5-propyl-2-furanpropionate(CMPF) and urate. Xenobiotics include the mycotoxin ochratoxin (OTA). May also contribute to the transport of organic compounds in testes across the blood-testis-barrier. May also work as a bidirectional OA/dicarboxylate exchanger. The chain is Solute carrier family 22 member 6 from Rattus norvegicus (Rat).